Here is a 295-residue protein sequence, read N- to C-terminus: Cytidine deaminase (295 aa).

2 CMP/dCMP-type deaminase domains span residues 48–168 (ADDE…FGPA) and 187–295 (EETT…YLAI). Residue 89 to 91 (NLE) coordinates substrate. Zn(2+) is bound at residue His102. The active-site Proton donor is the Glu104. Zn(2+)-binding residues include Cys129 and Cys132.

It belongs to the cytidine and deoxycytidylate deaminase family. Homodimer. Zn(2+) serves as cofactor.

The catalysed reaction is cytidine + H2O + H(+) = uridine + NH4(+). It carries out the reaction 2'-deoxycytidine + H2O + H(+) = 2'-deoxyuridine + NH4(+). Functionally, this enzyme scavenges exogenous and endogenous cytidine and 2'-deoxycytidine for UMP synthesis. The sequence is that of Cytidine deaminase from Vibrio atlanticus (strain LGP32) (Vibrio splendidus (strain Mel32)).